The following is a 77-amino-acid chain: Defensin-like protein 4 (77 aa).

A signal peptide spans 1–30 (MKFSMRLISAVLFLVMIFVATGMGPVTVEA). Disulfide bonds link cysteine 33/cysteine 77, cysteine 44/cysteine 64, cysteine 50/cysteine 71, and cysteine 54/cysteine 73.

It belongs to the DEFL family. In terms of tissue distribution, expressed in roots, siliques and seeds.

It localises to the secreted. Confers broad-spectrum resistance to pathogens. The protein is Defensin-like protein 4 (PDF2.1) of Arabidopsis thaliana (Mouse-ear cress).